Reading from the N-terminus, the 2005-residue chain is Chitin synthase 8 (2005 aa).

Residues 5–773 (DEVAKLSQLT…AFRELEDELR (769 aa)) enclose the Myosin motor domain. Residue 108–115 (GDTSSGKS) coordinates ATP. 4 N-linked (GlcNAc...) asparagine glycosylation sites follow: Asn164, Asn364, Asn390, and Asn546. The tract at residues 585–631 (QSVKPMRAPSTRRPNRGNTIKRTNTIKKADDDDSDEDAADAADASTS) is disordered. Acidic residues predominate over residues 615 to 624 (DDDSDEDAAD). An actin-binding region spans residues 647–669 (LDLLLETLEDTKTWFTLCLRPND). The next 2 membrane-spanning stretches (helical) occupy residues 929 to 949 (KWVA…LSRF) and 965 to 985 (LAIN…IVVL). N-linked (GlcNAc...) asparagine glycosylation occurs at Asn1076. 3 helical membrane passes run 1232–1252 (ILLA…LAAL), 1604–1624 (LIFT…IVFI), and 1626–1646 (LLST…IVLV). N-linked (GlcNAc...) asparagine glycosylation is present at Asn1650. A run of 2 helical transmembrane segments spans residues 1653 to 1673 (VPLT…VIFL) and 1680 to 1700 (MIGW…FLPL). Asn1770 and Asn1794 each carry an N-linked (GlcNAc...) asparagine glycan. Residues 1796 to 1821 (SFGHSPSPSYGGTPSQFGAFAPGPGS) form a disordered region. Residues 1797–1811 (FGHSPSPSYGGTPSQ) show a composition bias toward polar residues. A glycan (N-linked (GlcNAc...) asparagine) is linked at Asn1882. Residues 1912 to 1950 (FATAEQQQQQQQQQQAAGLSGSGGSKSPPREAVAGGLPS) are disordered. Residues 1917–1930 (QQQQQQQQQQAAGL) show a composition bias toward low complexity. A DEK-C domain is found at 1948–2003 (LPSDSQIKLDIRSLIAESDLTTITKKQLRAKLEQKYATSIESKKAFINSEIENVLS).

The protein in the N-terminal section; belongs to the TRAFAC class myosin-kinesin ATPase superfamily. Myosin family. This sequence in the C-terminal section; belongs to the chitin synthase family. Class V subfamily.

It is found in the cell membrane. The protein localises to the cytoplasmic vesicle membrane. Its subcellular location is the cell tip. The enzyme catalyses [(1-&gt;4)-N-acetyl-beta-D-glucosaminyl](n) + UDP-N-acetyl-alpha-D-glucosamine = [(1-&gt;4)-N-acetyl-beta-D-glucosaminyl](n+1) + UDP + H(+). Functionally, polymerizes chitin, a structural polymer of the cell wall and septum, by transferring the sugar moiety of UDP-GlcNAc to the non-reducing end of the growing chitin polymer. Involved in mating tube and dikaryotic hyphae formation and required for the formation of invading hyphae during plant infection. The polypeptide is Chitin synthase 8 (Mycosarcoma maydis (Corn smut fungus)).